The following is a 121-amino-acid chain: SMYQLWKMILQETGKNAVPSYGLYGCNCGVGSRGKPKDATDRCCFVHKCCYKKLTDCSPKTDSYSYSWKDKTIVCGDNNPCLQEMCECDKAVAICLRENLDTYNKNYKIYPKPLCKKADAC.

7 disulfides stabilise this stretch: Cys-26–Cys-115, Cys-28–Cys-44, Cys-43–Cys-95, Cys-49–Cys-121, Cys-50–Cys-88, Cys-57–Cys-81, and Cys-75–Cys-86. Positions 105-117 are important for membrane-damaging activities in eukaryotes and bacteria; heparin-binding; the sequence is KNYKIYPKPLCKK.

This sequence belongs to the phospholipase A2 family. Group II subfamily. K49 sub-subfamily. Monomer. As to expression, expressed by the venom gland.

The protein resides in the secreted. Functionally, snake venom phospholipase A2 homolog that lacks enzymatic activity but shows high myotoxic activities. In vivo, induces a mild edema when subcutaneously injected into mice foot pad. The protein is Basic phospholipase A2 homolog GodMT-II of Cerrophidion godmani (Porthidium godmani).